The following is an 89-amino-acid chain: Small ribosomal subunit protein uS15 (89 aa).

This sequence belongs to the universal ribosomal protein uS15 family. As to quaternary structure, part of the 30S ribosomal subunit. Forms a bridge to the 50S subunit in the 70S ribosome, contacting the 23S rRNA.

Its function is as follows. One of the primary rRNA binding proteins, it binds directly to 16S rRNA where it helps nucleate assembly of the platform of the 30S subunit by binding and bridging several RNA helices of the 16S rRNA. Functionally, forms an intersubunit bridge (bridge B4) with the 23S rRNA of the 50S subunit in the ribosome. The chain is Small ribosomal subunit protein uS15 from Treponema denticola (strain ATCC 35405 / DSM 14222 / CIP 103919 / JCM 8153 / KCTC 15104).